We begin with the raw amino-acid sequence, 682 residues long: Potassium-transporting ATPase ATP-binding subunit (682 aa).

4 consecutive transmembrane segments (helical) span residues 34-54, 58-78, 219-239, and 254-274; these read PVMF…LAMV, IAGS…TVLF, IALT…TATL, and VLVA…LSAI. The active-site 4-aspartylphosphate intermediate is D307. ATP is bound by residues D344, E348, 377-384, and K395; that span reads FTAQSRMS. Positions 518 and 522 each coordinate Mg(2+). The next 3 membrane-spanning stretches (helical) occupy residues 588-608, 616-636, and 662-682; these read FAII…LNVM, AILS…PLAL, and LVVP…LGLA.

Belongs to the cation transport ATPase (P-type) (TC 3.A.3) family. Type IA subfamily. In terms of assembly, the system is composed of three essential subunits: KdpA, KdpB and KdpC.

The protein localises to the cell inner membrane. It carries out the reaction K(+)(out) + ATP + H2O = K(+)(in) + ADP + phosphate + H(+). Part of the high-affinity ATP-driven potassium transport (or Kdp) system, which catalyzes the hydrolysis of ATP coupled with the electrogenic transport of potassium into the cytoplasm. This subunit is responsible for energy coupling to the transport system and for the release of the potassium ions to the cytoplasm. The polypeptide is Potassium-transporting ATPase ATP-binding subunit (Salmonella typhimurium (strain LT2 / SGSC1412 / ATCC 700720)).